The chain runs to 181 residues: c-Myc-binding protein homolog (181 aa).

Residues glutamate 111 to asparagine 127 are compositionally biased toward low complexity. Disordered stretches follow at residues glutamate 111 to isoleucine 145 and valine 159 to glutamate 181. Residues proline 168–glutamate 181 are compositionally biased toward polar residues.

This sequence belongs to the AMY1 family.

The protein localises to the nucleus. This chain is c-Myc-binding protein homolog, found in Drosophila melanogaster (Fruit fly).